Here is a 202-residue protein sequence, read N- to C-terminus: N-(5'-phosphoribosyl)anthranilate isomerase (202 aa).

The protein belongs to the TrpF family.

It carries out the reaction N-(5-phospho-beta-D-ribosyl)anthranilate = 1-(2-carboxyphenylamino)-1-deoxy-D-ribulose 5-phosphate. Its pathway is amino-acid biosynthesis; L-tryptophan biosynthesis; L-tryptophan from chorismate: step 3/5. In Geobacter metallireducens (strain ATCC 53774 / DSM 7210 / GS-15), this protein is N-(5'-phosphoribosyl)anthranilate isomerase.